A 219-amino-acid polypeptide reads, in one-letter code: MTEQVQANETETPVAVADERIIRETGIDAKVAGIVEPVINTLGFRLVRVRLSGLNGQTLQIMAERPDGTMTVDDCELVSRTVAPVLDVEDPISGKYHLEISSPGIDRPLVRKSDFSDWAGHIAKVETSIVHEGRKKFRGRIVVGEADSVTIESDQISYGNEPVVRIPFDLISDARLVLTDDLIRDALRKDKALREGRIPGDDLGAEPEDAASTETQEKK.

A disordered region spans residues 195 to 219 (EGRIPGDDLGAEPEDAASTETQEKK).

It belongs to the RimP family.

It is found in the cytoplasm. Its function is as follows. Required for maturation of 30S ribosomal subunits. In Brucella melitensis biotype 2 (strain ATCC 23457), this protein is Ribosome maturation factor RimP.